The sequence spans 473 residues: ATP synthase subunit beta (473 aa).

Residue 158-165 (GGAGVGKT) participates in ATP binding.

The protein belongs to the ATPase alpha/beta chains family. In terms of assembly, F-type ATPases have 2 components, CF(1) - the catalytic core - and CF(0) - the membrane proton channel. CF(1) has five subunits: alpha(3), beta(3), gamma(1), delta(1), epsilon(1). CF(0) has three main subunits: a(1), b(2) and c(9-12). The alpha and beta chains form an alternating ring which encloses part of the gamma chain. CF(1) is attached to CF(0) by a central stalk formed by the gamma and epsilon chains, while a peripheral stalk is formed by the delta and b chains.

Its subcellular location is the cell membrane. The enzyme catalyses ATP + H2O + 4 H(+)(in) = ADP + phosphate + 5 H(+)(out). Produces ATP from ADP in the presence of a proton gradient across the membrane. The catalytic sites are hosted primarily by the beta subunits. The polypeptide is ATP synthase subunit beta (Geobacillus sp. (strain WCH70)).